Consider the following 772-residue polypeptide: Subtilisin-like protease SBT5.3 (772 aa).

The N-terminal stretch at 1–25 is a signal peptide; sequence MKLTHNFSFLLLLLLVHMSSKHILA. Positions 31-116 constitute an Inhibitor I9 domain; it reads SYVVYFGAHS…VFPNKALKLH (86 aa). The region spanning 120–628 is the Peptidase S8 domain; that stretch reads SWDFLGLEHN…AGHVQPNLAV (509 aa). Residue Asp153 is the Charge relay system of the active site. A glycan (N-linked (GlcNAc...) asparagine) is linked at Asn211. Residue His223 is the Charge relay system of the active site. Asn246, Asn306, and Asn396 each carry an N-linked (GlcNAc...) asparagine glycan. The 83-residue stretch at 398-480 folds into the PA domain; it reads SALDAQLCKL…KDSFAVSRYI (83 aa). Catalysis depends on Ser561, which acts as the Charge relay system. N-linked (GlcNAc...) asparagine glycosylation is found at Asn606, Asn651, Asn662, Asn684, and Asn725.

It belongs to the peptidase S8 family. As to expression, expressed specifically at sites of lateral root emergence.

It localises to the secreted. The protein localises to the cell wall. Functionally, serine protease. Has a substrate preference for the hydrophobic residues Phe and Ala and the basic residue Asp in the P1 position, and for Asp, Leu or Ala in the P1' position. May play a role in the degradation of structural proteins in the extracellular matrix of cells located above sites of lateral root formation and thus facilitate lateral root emergence. The polypeptide is Subtilisin-like protease SBT5.3 (AIR3) (Arabidopsis thaliana (Mouse-ear cress)).